The chain runs to 249 residues: Phosphomannomutase 2 (249 aa).

The active-site Nucleophile is the aspartate 12. The Mg(2+) site is built by aspartate 12 and aspartate 14. Aspartate 14 functions as the Proton donor/acceptor in the catalytic mechanism. Alpha-D-mannose 1-phosphate is bound by residues arginine 21, arginine 123, arginine 134, arginine 141, serine 179, and aspartate 181. Aspartate 209 contributes to the Mg(2+) binding site.

This sequence belongs to the eukaryotic PMM family. In terms of assembly, homodimer.

It is found in the cytoplasm. The catalysed reaction is alpha-D-mannose 1-phosphate = D-mannose 6-phosphate. It functions in the pathway nucleotide-sugar biosynthesis; GDP-alpha-D-mannose biosynthesis; alpha-D-mannose 1-phosphate from D-fructose 6-phosphate: step 2/2. Involved in the synthesis of the GDP-mannose and dolichol-phosphate-mannose required for a number of critical mannosyl transfer reactions. This is Phosphomannomutase 2 (pmmB) from Dictyostelium discoideum (Social amoeba).